A 316-amino-acid chain; its full sequence is MNTSITARELFDQQRDKLALRWVAGPKGEHREIQAGSNNARRPSLAGYLNVIYPNKVQILGTEELAWLDSLDARQRWETIEKIIQVQPLALAISKNQSCPEDLRAAADESNTPLWISSKRGHELLNHLSYHLARTLAPRVTLHGVFMEIYSIGVLITGEAGSGKSELALELLSRGHRLVADDAPEFTQIAPDVLDGTCPELLQDLLEVRGLGVLNVRDMFGDTAVKKNKYLRLIVHLTRPMTEPTPSGYERLTGDSGSRHVLDLDVPLITLPVMPGRNLAVLTEAATRLHILRTKGIDPAAMFIARHSNLLERRTP.

Catalysis depends on residues His143 and Lys164. 158-165 (GEAGSGKS) is a binding site for ATP. Ser165 serves as a coordination point for Mg(2+). The active-site Proton acceptor; for phosphorylation activity. Proton donor; for dephosphorylation activity is the Asp182. Residues 206–215 (LEVRGLGVLN) form an important for the catalytic mechanism of both phosphorylation and dephosphorylation region. Glu207 serves as a coordination point for Mg(2+). Residue Arg251 is part of the active site. The tract at residues 272–277 (PVMPGR) is important for the catalytic mechanism of dephosphorylation.

The protein belongs to the HPrK/P family. In terms of assembly, homohexamer. Mg(2+) is required as a cofactor.

The enzyme catalyses [HPr protein]-L-serine + ATP = [HPr protein]-O-phospho-L-serine + ADP + H(+). The catalysed reaction is [HPr protein]-O-phospho-L-serine + phosphate + H(+) = [HPr protein]-L-serine + diphosphate. Catalyzes the ATP- as well as the pyrophosphate-dependent phosphorylation of a specific serine residue in HPr, a phosphocarrier protein of the phosphoenolpyruvate-dependent sugar phosphotransferase system (PTS). HprK/P also catalyzes the pyrophosphate-producing, inorganic phosphate-dependent dephosphorylation (phosphorolysis) of seryl-phosphorylated HPr (P-Ser-HPr). The chain is HPr kinase/phosphorylase from Xanthomonas euvesicatoria pv. vesicatoria (strain 85-10) (Xanthomonas campestris pv. vesicatoria).